The sequence spans 431 residues: Na(+)/H(+) antiporter NhaA 1 (431 aa).

The next 11 helical transmembrane spans lie at 17–37, 56–76, 98–118, 123–143, 154–174, 182–202, 209–229, 301–321, 329–349, 373–393, and 400–420; these read LSGILLLFVTLFAIIVANSNF, FIISMPLRLWINDGLMALFFL, MFPFVASLGGMIVPASIYIAL, FIGFGIPMGTDTAFAIAMLIL, LFLVALAVIDDLGAIIVVATV, EYFLHAAFVYGLIWLLNYFDV, LFLGIFLWIFIHETGVHATIA, FSAFFIMPIFAFSNAGVLLDF, MIVLGVALGLLVGKPLGIFGF, VGFIAGIGFTMSIFIANLAFI, and AIKIGIFTASFMATVIGMILI.

This sequence belongs to the NhaA Na(+)/H(+) (TC 2.A.33) antiporter family.

The protein localises to the cell inner membrane. It catalyses the reaction Na(+)(in) + 2 H(+)(out) = Na(+)(out) + 2 H(+)(in). In terms of biological role, na(+)/H(+) antiporter that extrudes sodium in exchange for external protons. The protein is Na(+)/H(+) antiporter NhaA 1 of Aliarcobacter butzleri (strain RM4018) (Arcobacter butzleri).